We begin with the raw amino-acid sequence, 337 residues long: Mitochondrial amidoxime-reducing component 1 (337 aa).

A lipid anchor (N-myristoyl glycine) is attached at glycine 2. Residues 2–20 (GAAGSSALARFVLLAQSRP) lie on the Mitochondrial matrix side of the membrane. A helical; Signal-anchor for type II membrane protein transmembrane segment spans residues 21 to 40 (GWLGVAALGLTAVALGAVAW). Topologically, residues 41-337 (RRAWPTRRRR…VGDPVYLLGQ (297 aa)) are cytoplasmic. Mo-molybdopterin-binding residues include lysine 67, serine 68, and arginine 92. Residues 93–183 (FWLVINQEGN…KSQPYRLVHF (91 aa)) form an MOSC N-terminal region region. In terms of domain architecture, MOSC spans 187-335 (MRPRRPHQIA…IKVGDPVYLL (149 aa)). 8 residues coordinate Mo-molybdopterin: threonine 210, serine 211, arginine 238, asparagine 240, serine 271, arginine 272, cysteine 273, and tyrosine 317.

In terms of assembly, component of a complex composed of cytochrome b5, NADH-cytochrome b5 reductase and MTARC1. Requires Mo-molybdopterin as cofactor.

It localises to the mitochondrion outer membrane. Its subcellular location is the membrane. The enzyme catalyses N(omega)-hydroxy-L-arginine + 2 Fe(II)-[cytochrome b5] + 2 H(+) = L-arginine + 2 Fe(III)-[cytochrome b5] + H2O. Catalyzes the reduction of N-oxygenated molecules, acting as a counterpart of cytochrome P450 and flavin-containing monooxygenases in metabolic cycles. As a component of prodrug-converting system, reduces a multitude of N-hydroxylated prodrugs particularly amidoximes, leading to increased drug bioavailability. May be involved in mitochondrial N(omega)-hydroxy-L-arginine (NOHA) reduction, regulating endogenous nitric oxide levels and biosynthesis. Postulated to cleave the N-OH bond of N-hydroxylated substrates in concert with electron transfer from NADH to cytochrome b5 reductase then to cytochrome b5, the ultimate electron donor that primes the active site for substrate reduction. This chain is Mitochondrial amidoxime-reducing component 1, found in Homo sapiens (Human).